The chain runs to 152 residues: MGRFIFLSFGLLVVFLSLSGTGADCPSGWSSYEGHCYNIFHLFKTWAEAERFCRKQVKGAHLVSIESSEEADFVAQLVSENMKRYGIYIWIGLRVRGKKKQCSSQWSDGSSVSYQNWIEAESKTCLGLQKETEFRKWFNIYCGERNPFVCEA.

The first 23 residues, 1–23, serve as a signal peptide directing secretion; that stretch reads MGRFIFLSFGLLVVFLSLSGTGA. Disulfide bonds link cysteine 25–cysteine 36, cysteine 53–cysteine 150, and cysteine 125–cysteine 142. A C-type lectin domain is found at 32 to 151; sequence YEGHCYNIFH…CGERNPFVCE (120 aa). Residues serine 64, glutamate 66, and glutamate 70 each contribute to the Ca(2+) site. Glutamate 151 provides a ligand contact to Ca(2+).

The protein belongs to the snaclec family. Heterodimer of subunits A and B; disulfide-linked. In terms of tissue distribution, expressed by the venom gland.

The protein localises to the secreted. Functionally, anticoagulant protein which binds to the gamma-carboxyglutamic acid-domain regions of factors IX (F9) and factor X (F10) in the presence of calcium with a 1 to 1 stoichiometry. This Gloydius halys (Chinese water mocassin) protein is Snaclec coagulation factor IX/factor X-binding protein subunit A.